Reading from the N-terminus, the 371-residue chain is Maltose/maltodextrin import ATP-binding protein MalK (371 aa).

The ABC transporter domain occupies Val-4–Ile-234. Gly-36 to Ser-43 lines the ATP pocket.

It belongs to the ABC transporter superfamily. Maltooligosaccharide importer (TC 3.A.1.1.1) family. In terms of assembly, the complex is composed of two ATP-binding proteins (MalK), two transmembrane proteins (MalG and MalK) and a solute-binding protein (MalE).

It localises to the cell inner membrane. The catalysed reaction is D-maltose(out) + ATP + H2O = D-maltose(in) + ADP + phosphate + H(+). Functionally, part of the ABC transporter complex MalEFGK involved in maltose/maltodextrin import. Responsible for energy coupling to the transport system. The chain is Maltose/maltodextrin import ATP-binding protein MalK from Vibrio vulnificus (strain CMCP6).